Consider the following 219-residue polypeptide: MRADKGAVGTVAVVCAFDLSDYAFVPLCGTREQSCMKAVPGFVPCVEVRGCESTAGVGRRCAFERAVTAAYALPGCHQVCVYADAASAAKVARFMQCATPIFPSLRVNVLDDMRVSAFFAHVARVCAEYAQLGEEPEAVFVLRADAPFIDSVASAQLYAQHREYLAEYSFADGYPEGLFAAVVAPGLFPILATLTQDAHICFALRSFLRALKQTLILLI.

This is an uncharacterized protein from Treponema pallidum (strain Nichols).